A 328-amino-acid chain; its full sequence is Putative gluconeogenesis factor (328 aa).

The protein belongs to the gluconeogenesis factor family.

It localises to the cytoplasm. Functionally, required for morphogenesis under gluconeogenic growth conditions. The polypeptide is Putative gluconeogenesis factor (Aquifex aeolicus (strain VF5)).